We begin with the raw amino-acid sequence, 429 residues long: Adenylosuccinate synthetase (429 aa).

GTP contacts are provided by residues 12-18 (GDEGKGK) and 40-42 (GHT). The active-site Proton acceptor is Asp-13. Mg(2+) contacts are provided by Asp-13 and Gly-40. IMP-binding positions include 13-16 (DEGK), 38-41 (NAGH), Thr-128, Arg-142, Gln-223, Thr-238, and Arg-302. His-41 functions as the Proton donor in the catalytic mechanism. Position 298–304 (298–304 (VNTGRKR)) interacts with substrate. GTP contacts are provided by residues Arg-304, 330–332 (KLD), and 412–414 (GVG).

Belongs to the adenylosuccinate synthetase family. Homodimer. The cofactor is Mg(2+).

It is found in the cytoplasm. The catalysed reaction is IMP + L-aspartate + GTP = N(6)-(1,2-dicarboxyethyl)-AMP + GDP + phosphate + 2 H(+). The protein operates within purine metabolism; AMP biosynthesis via de novo pathway; AMP from IMP: step 1/2. Plays an important role in the de novo pathway of purine nucleotide biosynthesis. Catalyzes the first committed step in the biosynthesis of AMP from IMP. This is Adenylosuccinate synthetase from Corynebacterium diphtheriae (strain ATCC 700971 / NCTC 13129 / Biotype gravis).